The following is a 239-amino-acid chain: Putative transcriptional regulator of 2-aminoethylphosphonate degradation operons (239 aa).

An HTH gntR-type domain is found at 8 to 76; it reads IPQYLLIKAQ…DRRGWFVTPE (69 aa). The segment at residues 36–55 is a DNA-binding region (H-T-H motif); sequence ERELCAIFNTTRITIRESLA.

The polypeptide is Putative transcriptional regulator of 2-aminoethylphosphonate degradation operons (phnR) (Salmonella paratyphi A (strain ATCC 9150 / SARB42)).